We begin with the raw amino-acid sequence, 255 residues long: MSDYIVVKCGGSMLNQLNDVFFDCIKKLQQKYKVVIVHGGGPEIDAKLKDCNINVEKRDGLRITPKEVMDVVQMVLCGSTNKKLVMNLQKHNLLAVGCSGCDGNLLQVQPVSEEIGYVGEVSYVETALLKGLINMGYIPVIAPIGVNGNEIYNINADNAAAGIAATLGAKELIFITDVDGILHEGNLVKETDESEIATFIETGVITGGMIPKVQAALASLKMGVQKISIVNGTKDFTEVTGECIGTTVTKGVSIA.

Substrate-binding positions include 40–41 (GG), Arg62, and Asn153.

It belongs to the acetylglutamate kinase family. ArgB subfamily.

The protein localises to the cytoplasm. The catalysed reaction is N-acetyl-L-glutamate + ATP = N-acetyl-L-glutamyl 5-phosphate + ADP. The protein operates within amino-acid biosynthesis; L-arginine biosynthesis; N(2)-acetyl-L-ornithine from L-glutamate: step 2/4. Functionally, catalyzes the ATP-dependent phosphorylation of N-acetyl-L-glutamate. The sequence is that of Acetylglutamate kinase from Bacillus cereus (strain B4264).